The sequence spans 437 residues: Phosphomethylpyrimidine synthase (437 aa).

Substrate-binding positions include N69, M98, Y127, H163, 185–187 (SRG), 226–229 (DACR), and E265. H269 contacts Zn(2+). Y292 serves as a coordination point for substrate. H333 provides a ligand contact to Zn(2+). [4Fe-4S] cluster contacts are provided by C409, C412, and C416.

The protein belongs to the ThiC family. Requires [4Fe-4S] cluster as cofactor.

The catalysed reaction is 5-amino-1-(5-phospho-beta-D-ribosyl)imidazole + S-adenosyl-L-methionine = 4-amino-2-methyl-5-(phosphooxymethyl)pyrimidine + CO + 5'-deoxyadenosine + formate + L-methionine + 3 H(+). It functions in the pathway cofactor biosynthesis; thiamine diphosphate biosynthesis. Its function is as follows. Catalyzes the synthesis of the hydroxymethylpyrimidine phosphate (HMP-P) moiety of thiamine from aminoimidazole ribotide (AIR) in a radical S-adenosyl-L-methionine (SAM)-dependent reaction. The protein is Phosphomethylpyrimidine synthase of Clostridium botulinum (strain 657 / Type Ba4).